Consider the following 283-residue polypeptide: Bifunctional protein FolD (283 aa).

Residues Gly164–Ser166, Ser189, and Ile230 each bind NADP(+).

This sequence belongs to the tetrahydrofolate dehydrogenase/cyclohydrolase family. Homodimer.

It carries out the reaction (6R)-5,10-methylene-5,6,7,8-tetrahydrofolate + NADP(+) = (6R)-5,10-methenyltetrahydrofolate + NADPH. The catalysed reaction is (6R)-5,10-methenyltetrahydrofolate + H2O = (6R)-10-formyltetrahydrofolate + H(+). The protein operates within one-carbon metabolism; tetrahydrofolate interconversion. Catalyzes the oxidation of 5,10-methylenetetrahydrofolate to 5,10-methenyltetrahydrofolate and then the hydrolysis of 5,10-methenyltetrahydrofolate to 10-formyltetrahydrofolate. The polypeptide is Bifunctional protein FolD (Lacticaseibacillus paracasei (strain ATCC 334 / BCRC 17002 / CCUG 31169 / CIP 107868 / KCTC 3260 / NRRL B-441) (Lactobacillus paracasei)).